Reading from the N-terminus, the 464-residue chain is Cysteine--tRNA ligase (464 aa).

Cysteine 29 provides a ligand contact to Zn(2+). The 'HIGH' region signature appears at 31-41 (PTVYDFAHIGN). Zn(2+) contacts are provided by cysteine 224, histidine 249, and glutamate 253. A 'KMSKS' region motif is present at residues 282–286 (KMSKS). Lysine 285 is an ATP binding site.

This sequence belongs to the class-I aminoacyl-tRNA synthetase family. In terms of assembly, monomer. Requires Zn(2+) as cofactor.

The protein resides in the cytoplasm. It catalyses the reaction tRNA(Cys) + L-cysteine + ATP = L-cysteinyl-tRNA(Cys) + AMP + diphosphate. This Afipia carboxidovorans (strain ATCC 49405 / DSM 1227 / KCTC 32145 / OM5) (Oligotropha carboxidovorans) protein is Cysteine--tRNA ligase.